The following is a 464-amino-acid chain: ERO1-like protein alpha (464 aa).

The first 23 residues, 1-23 (MGRGWGLLVGLLGVVWLLRSGQG), serve as a signal peptide directing secretion. Intrachain disulfides connect cysteine 35–cysteine 48, cysteine 37–cysteine 46, cysteine 85–cysteine 387, cysteine 94–cysteine 99, cysteine 94–cysteine 130, cysteine 99–cysteine 104, cysteine 207–cysteine 237, and cysteine 390–cysteine 393. A phosphoserine mark is found at serine 106, serine 142, and serine 144. FAD is bound by residues arginine 186, threonine 188, and tryptophan 199. Residues serine 248 and histidine 251 each contribute to the FAD site. N-linked (GlcNAc...) asparagine glycosylation occurs at asparagine 276. FAD-binding residues include arginine 283 and arginine 296. Asparagine 380 carries N-linked (GlcNAc...) asparagine glycosylation.

It belongs to the EROs family. In terms of assembly, predominantly monomer. May function both as a monomer and a homodimer. Interacts with PDILT. Interacts with ERP44; the interaction results in retention of ERO1A in the endoplasmic reticulum. FAD is required as a cofactor. N-glycosylated. Post-translationally, the Cys-94/Cys-99 and Cys-390/Cys-393 disulfide bonds constitute the redox-active center. The Cys-94/Cys-99 disulfide bond may accept electron from P4HB and funnel them to the active site disulfide Cys-390/Cys-393. The regulatory Cys-99/Cys-104 disulfide bond stabilizes the other regulatory bond Cys-94/Cys-130. In terms of processing, phosphorylated on Ser-144 by FAM20C in the Golgi which increases its enzymatic activity. Phosphorylation is induced by lactation. It is also induced by hypoxia and reductive stress.

The protein resides in the endoplasmic reticulum membrane. It localises to the golgi apparatus lumen. The protein localises to the secreted. Its subcellular location is the cell projection. It is found in the dendrite. Enzyme activity is tightly regulated to prevent the accumulation of reactive oxygen species in the endoplasmic reticulum. Reversibly down-regulated by the formation of disulfide bonds between the active site Cys-94 and Cys-130, and between Cys-99 and Cys-104. Glutathione may be required to regulate its activity in the endoplasmic reticulum. Its function is as follows. Oxidoreductase involved in disulfide bond formation in the endoplasmic reticulum. Efficiently reoxidizes P4HB/PDI, the enzyme catalyzing protein disulfide formation, in order to allow P4HB to sustain additional rounds of disulfide formation. Following P4HB reoxidation, passes its electrons to molecular oxygen via FAD, leading to the production of reactive oxygen species (ROS) in the cell. Required for the proper folding of immunoglobulins. Plays an important role in ER stress-induced, CHOP-dependent apoptosis by activating the inositol 1,4,5-trisphosphate receptor IP3R1. This chain is ERO1-like protein alpha, found in Rattus norvegicus (Rat).